We begin with the raw amino-acid sequence, 576 residues long: G protein-coupled receptor kinase 6 (576 aa).

The N-terminal stretch occupies residues 1–185 (MELENIVANT…LERQPVTKNT (185 aa)). Residues 53 to 171 (YHSLCERQPI…LDSIYFNRFL (119 aa)) form the RGS domain. The Protein kinase domain maps to 186-448 (FRQYRVLGKG…AREVKEHPLF (263 aa)). Residues 192 to 200 (LGKGGFGEV), Lys-215, and 264 to 270 (TLMNGGD) each bind ATP. Asp-311 functions as the Proton acceptor in the catalytic mechanism. An ATP-binding site is contributed by 315-318 (ENIL). In terms of domain architecture, AGC-kinase C-terminal spans 449–514 (KKLNFKRLGA…GSVSIPWQNE (66 aa)). Ser-484 carries the post-translational modification Phosphoserine; by autocatalysis. At Thr-485 the chain carries Phosphothreonine; by autocatalysis. 3 S-palmitoyl cysteine lipidation sites follow: Cys-561, Cys-562, and Cys-565. 2 positions are modified to phosphoserine: Ser-566 and Ser-568.

Belongs to the protein kinase superfamily. AGC Ser/Thr protein kinase family. GPRK subfamily. Interacts with GIT1. In terms of tissue distribution, widely expressed. Detectable in all brain areas examined.

The protein resides in the membrane. The catalysed reaction is [G-protein-coupled receptor] + ATP = [G-protein-coupled receptor]-phosphate + ADP + H(+). Its function is as follows. Specifically phosphorylates the activated forms of G protein-coupled receptors. Such receptor phosphorylation initiates beta-arrestin-mediated receptor desensitization, internalization, and signaling events leading to their desensitization. Seems to be involved in the desensitization of D2-like dopamine receptors in striatum and chemokine receptor CXCR4 which is critical for CXCL12-induced cell chemotaxis. Phosphorylates rhodopsin (RHO) (in vitro) and a non G-protein-coupled receptor: LRP6 during Wnt signaling (in vitro). This Rattus norvegicus (Rat) protein is G protein-coupled receptor kinase 6 (Grk6).